Reading from the N-terminus, the 631-residue chain is Sphingomyelin phosphodiesterase (631 aa).

The tract at residues 1 to 23 (MPRYGASLRQSCPRSGREQGQDG) is disordered. Residues 1–46 (MPRYGASLRQSCPRSGREQGQDGTAGAPGLLWMGLVLALALALALA) form the signal peptide. The Saposin B-type domain occupies 87-171 (GNLTCPICKG…LLGSTCGHWD (85 aa)). A glycan (N-linked (GlcNAc...) asparagine) is linked at asparagine 88. 3 disulfides stabilise this stretch: cysteine 91-cysteine 167, cysteine 94-cysteine 159, and cysteine 122-cysteine 133. A glycan (N-linked (GlcNAc...) asparagine) is linked at asparagine 177. The Zn(2+) site is built by aspartate 208 and histidine 210. 2 disulfides stabilise this stretch: cysteine 223–cysteine 228 and cysteine 229–cysteine 252. 2 residues coordinate Zn(2+): aspartate 280 and asparagine 320. N-linked (GlcNAc...) asparagine glycosylation is found at asparagine 337 and asparagine 397. Cysteine 387 and cysteine 433 form a disulfide bridge. Positions 427, 459, and 461 each coordinate Zn(2+). Residue asparagine 505 is glycosylated (N-linked (GlcNAc...) asparagine). The residue at position 510 (serine 510) is a Phosphoserine; by PKC/PRKCD. Asparagine 522 is a glycosylation site (N-linked (GlcNAc...) asparagine). 2 cysteine pairs are disulfide-bonded: cysteine 586/cysteine 590 and cysteine 596/cysteine 609.

The protein belongs to the acid sphingomyelinase family. Monomer. Interacts with SORT1; the interaction is required for SMPD1 targeting to lysosomes. Zn(2+) serves as cofactor. Proteolytically processed. Mature lysosomal form arises from C-terminal proteolytic processing of pro-sphingomyelin phosphodiesterase. In terms of processing, this form is generated following cleavage by CASP7 in the extracellular milieu. It shows increased activity. Post-translationally, both lysosomal and secreted forms are glycosylated but they show a differential pattern of glycosylation. Phosphorylated at Ser-510 by PRKCD upon stress stimuli. Phosphorylation is required for secretion.

It localises to the lysosome. The protein resides in the lipid droplet. It is found in the secreted. The protein localises to the extracellular space. It catalyses the reaction a sphingomyelin + H2O = phosphocholine + an N-acylsphing-4-enine + H(+). It carries out the reaction N-(octadecanoyl)-sphing-4-enine-1-phosphocholine + H2O = N-octadecanoylsphing-4-enine + phosphocholine + H(+). The catalysed reaction is 1,2-dihexadecanoyl-sn-glycero-3-phosphocholine + H2O = 1,2-dihexadecanoyl-sn-glycerol + phosphocholine + H(+). The enzyme catalyses a 1,2-diacyl-sn-glycero-3-phosphocholine + H2O = phosphocholine + a 1,2-diacyl-sn-glycerol + H(+). Its activity is regulated as follows. Hydrolysis of liposomal sphingomyelin is stimulated by incorporation of diacylglycerol (DAG), ceramide and free fatty acids into the liposomal membranes. Phosphatidylcholine hydrolysis is inhibited by incorporation of cholesterol, ceramide, DAG, monoacylglycerol and fatty acids. Antidepressants, namely amitriptyline, imipramine, desipramine, fluoxetine, sertraline, escitalopram, and maprotiline inhibit sphingomyelin phosphodiesterase activity. (Microbial infection) The secretory form is activated by P.aeruginosa, this activation results in the release of ceramide in the outer leaflet of the plasma membrane. With respect to regulation, (Microbial infection) The secretory form is activated by human coronavirus SARS-CoV-2, this activation results in the release of ceramide in the outer leaflet of the plasma membrane. Functionally, converts sphingomyelin to ceramide. Exists as two enzymatic forms that arise from alternative trafficking of a single protein precursor, one that is targeted to the endolysosomal compartment, whereas the other is released extracellularly. However, in response to various forms of stress, lysosomal exocytosis may represent a major source of the secretory form. In terms of biological role, in the lysosomes, converts sphingomyelin to ceramide. Plays an important role in the export of cholesterol from the intraendolysosomal membranes. Also has phospholipase C activities toward 1,2-diacylglycerolphosphocholine and 1,2-diacylglycerolphosphoglycerol. Modulates stress-induced apoptosis through the production of ceramide. When secreted, modulates cell signaling with its ability to reorganize the plasma membrane by converting sphingomyelin to ceramide. Secreted form is increased in response to stress and inflammatory mediators such as IL1B, IFNG or TNF as well as upon infection with bacteria and viruses. Produces the release of ceramide in the outer leaflet of the plasma membrane playing a central role in host defense. Ceramide reorganizes these rafts into larger signaling platforms that are required to internalize P.aeruginosa, induce apoptosis and regulate the cytokine response in infected cells. In wounded cells, the lysosomal form is released extracellularly in the presence of Ca(2+) and promotes endocytosis and plasma membrane repair. Its function is as follows. This form is generated following cleavage by CASP7 in the extracellular milieu in response to bacterial infection. It shows increased ability to convert sphingomyelin to ceramide and promotes plasma membrane repair. Plasma membrane repair by ceramide counteracts the action of gasdermin-D (GSDMD) perforin (PRF1) pores that are formed in response to bacterial infection. Functionally, (Microbial infection) Secretion is activated by bacteria such as P.aeruginosa, N.gonorrhoeae and others, this activation results in the release of ceramide in the outer leaflet of the plasma membrane which facilitates the infection. In terms of biological role, (Microbial infection) Secretion is activated by human coronaviruses SARS-CoV and SARS-CoV-2 as well as Zaire ebolavirus, this activation results in the release of ceramide in the outer leaflet of the plasma membrane which facilitates the infection. Lacks residues that bind the cofactor Zn(2+) and has no enzyme activity. In Homo sapiens (Human), this protein is Sphingomyelin phosphodiesterase.